The primary structure comprises 262 residues: MKNITVSSIKKKKNQEKITMITAYDALFARLFDGEVDILLVGDSLAMSFGGEEDTLPIGMDEMIYHTKAVCRGAEKSLVVIDMPFGSYDTKEKALHNAIRAYKESGASAVKLEGGIQKAETIALLSENGIAVMGHIGLKPQFVRAEGGYKVKGKEEGEAQSLLRDAKALEESGVFALVLEGVKAEVAQEVARSVSVPVIGIGSGSQVDGQVLVWSDMLGFFEGFTPKFVRRYLEGASLIRQGVREYAKDVREGRFPSEAESY.

Residues Asp43 and Asp82 each contribute to the Mg(2+) site. 3-methyl-2-oxobutanoate contacts are provided by residues 43 to 44 (DS), Asp82, and Lys111. Position 113 (Glu113) interacts with Mg(2+). Catalysis depends on Glu180, which acts as the Proton acceptor.

Belongs to the PanB family. As to quaternary structure, homodecamer; pentamer of dimers. Mg(2+) is required as a cofactor.

Its subcellular location is the cytoplasm. The catalysed reaction is 3-methyl-2-oxobutanoate + (6R)-5,10-methylene-5,6,7,8-tetrahydrofolate + H2O = 2-dehydropantoate + (6S)-5,6,7,8-tetrahydrofolate. It functions in the pathway cofactor biosynthesis; (R)-pantothenate biosynthesis; (R)-pantoate from 3-methyl-2-oxobutanoate: step 1/2. In terms of biological role, catalyzes the reversible reaction in which hydroxymethyl group from 5,10-methylenetetrahydrofolate is transferred onto alpha-ketoisovalerate to form ketopantoate. The polypeptide is 3-methyl-2-oxobutanoate hydroxymethyltransferase (Wolinella succinogenes (strain ATCC 29543 / DSM 1740 / CCUG 13145 / JCM 31913 / LMG 7466 / NCTC 11488 / FDC 602W) (Vibrio succinogenes)).